The chain runs to 483 residues: UDP-N-acetylmuramoylalanine--D-glutamate ligase (483 aa).

Glycine 119–threonine 125 contributes to the ATP binding site.

It belongs to the MurCDEF family.

It localises to the cytoplasm. It carries out the reaction UDP-N-acetyl-alpha-D-muramoyl-L-alanine + D-glutamate + ATP = UDP-N-acetyl-alpha-D-muramoyl-L-alanyl-D-glutamate + ADP + phosphate + H(+). It participates in cell wall biogenesis; peptidoglycan biosynthesis. Its function is as follows. Cell wall formation. Catalyzes the addition of glutamate to the nucleotide precursor UDP-N-acetylmuramoyl-L-alanine (UMA). In Mycolicibacterium vanbaalenii (strain DSM 7251 / JCM 13017 / BCRC 16820 / KCTC 9966 / NRRL B-24157 / PYR-1) (Mycobacterium vanbaalenii), this protein is UDP-N-acetylmuramoylalanine--D-glutamate ligase.